Reading from the N-terminus, the 506-residue chain is Glucosidase 2 subunit beta (506 aa).

The signal sequence occupies residues 1 to 23 (MKFSQWYTLTAPLLISSLYTVNA). Cysteine 86 and cysteine 108 are joined by a disulfide. 2 coiled-coil regions span residues 172–243 (SLVA…LYET) and 338–374 (ESYR…LEYH). Residues 279–474 (ESCNNHLSML…KMKSPAACSP (196 aa)) enclose the MRH domain. 2 disulfides stabilise this stretch: cysteine 431/cysteine 460 and cysteine 445/cysteine 472. Residues 503–506 (VDEL) carry the ER retrieval sequence motif.

Heterodimer of a catalytic subunit alpha (gls2) and a subunit beta (gtb1).

It localises to the endoplasmic reticulum. Its function is as follows. Subunit of glucosidase 2, which cleaves sequentially the 2 innermost alpha-1,3-linked glucose residues from the Glc(2)Man(9)GlcNAc(2) oligosaccharide precursor of immature glycoproteins in the endoplasmic reticulum (ER). Specifically required for the cleavage of the final glucose. The subunit beta retains the catalytic subunit alpha in the ER. The polypeptide is Glucosidase 2 subunit beta (gtb1) (Schizosaccharomyces pombe (strain 972 / ATCC 24843) (Fission yeast)).